Here is a 397-residue protein sequence, read N- to C-terminus: Succinyl-diaminopimelate desuccinylase (397 aa).

Histidine 73 contacts Zn(2+). The active site involves aspartate 75. Position 106 (aspartate 106) interacts with Zn(2+). The active-site Proton acceptor is the glutamate 140. 3 residues coordinate Zn(2+): glutamate 141, glutamate 169, and histidine 366.

It belongs to the peptidase M20A family. DapE subfamily. As to quaternary structure, homodimer. Zn(2+) serves as cofactor. The cofactor is Co(2+).

The enzyme catalyses N-succinyl-(2S,6S)-2,6-diaminopimelate + H2O = (2S,6S)-2,6-diaminopimelate + succinate. The protein operates within amino-acid biosynthesis; L-lysine biosynthesis via DAP pathway; LL-2,6-diaminopimelate from (S)-tetrahydrodipicolinate (succinylase route): step 3/3. Catalyzes the hydrolysis of N-succinyl-L,L-diaminopimelic acid (SDAP), forming succinate and LL-2,6-diaminopimelate (DAP), an intermediate involved in the bacterial biosynthesis of lysine and meso-diaminopimelic acid, an essential component of bacterial cell walls. In Sinorhizobium medicae (strain WSM419) (Ensifer medicae), this protein is Succinyl-diaminopimelate desuccinylase.